We begin with the raw amino-acid sequence, 350 residues long: Quercetin 2,3-dioxygenase (350 aa).

A cupin 1 region spans residues 1 to 145; sequence DTSSLIVEDA…FYYLGTNATD (145 aa). Cu cation contacts are provided by H66, H68, and E73. Residue H66 coordinates substrate. Residue E73 coordinates substrate. N-linked (GlcNAc...) asparagine glycosylation is found at N90 and N109. A Cu cation-binding site is contributed by H112. N-linked (GlcNAc...) asparagine glycosylation occurs at N142. Positions 146 to 205 are linker; it reads TTHTPYIPSSSDSSSTTGPDSSTISTLQSFDVYAELSFTPRTDTVNGTAPANTVWHTGAN. The segment at 148-167 is disordered; the sequence is HTPYIPSSSDSSSTTGPDSS. Over residues 152–167 the composition is skewed to low complexity; sequence IPSSSDSSSTTGPDSS. N-linked (GlcNAc...) asparagine glycans are attached at residues N191 and N248. Residues 206-350 form a cupin 2 region; it reads ALASTAGDPY…WSSVSFPADW (145 aa).

As to quaternary structure, homodimer. It depends on Cu cation as a cofactor. In terms of processing, the N-linked glycan at Asn-191 consists of Man(5)-GlcNAc(2).

The catalysed reaction is quercetin + O2 = 2-(3,4-dihydroxybenzoyloxy)-4,6-dihydroxybenzoate + CO. Its pathway is flavonoid metabolism; quercetin degradation. Inhibited by diethyldithiocarbamate and kojic acid. Functionally, performs the first step in the degradation of the flavonoid quercetin by a dioxygenase reaction. The enzyme catalyzes the cleavage of the O-heteroaromatic ring of the flavonol quercetin yielding the depside 2-protocatechuoyl-phloroglucinol carboxylic acid and carbon monoxide. This involves the remarkable dioxygenolytic cleavage of two carbon-carbon bonds. This chain is Quercetin 2,3-dioxygenase, found in Aspergillus japonicus.